The primary structure comprises 260 residues: Neuraminyllactose-binding hemagglutinin (260 aa).

An N-terminal signal peptide occupies residues 1–27 (MKANNHFKDFAWKKCLLGASVVALLVG). The N-palmitoyl cysteine moiety is linked to residue C28. The S-diacylglycerol cysteine moiety is linked to residue C28.

It is found in the cell outer membrane. The chain is Neuraminyllactose-binding hemagglutinin (hpaA) from Helicobacter pylori (strain ATCC 700392 / 26695) (Campylobacter pylori).